The following is a 312-amino-acid chain: Taste receptor type 2 member 135 (312 aa).

At 1–19 (MSTGHTVLGCQTTDKTVVT) the chain is on the extracellular side. A helical transmembrane segment spans residues 20–40 (LFIILVLLCLVAVVGNGFIII). Topologically, residues 41–66 (ALGMKWLLRRTLSAHNKLLISLAASR) are cytoplasmic. The helical transmembrane segment at 67–87 (FCLQCVVIGKNIYVFLNPTSF) threads the bilayer. Residues 88–97 (PYNPVIQLLN) lie on the Extracellular side of the membrane. Residues 98 to 118 (LMWDFLTAATIWLCSLLGFFY) form a helical membrane-spanning segment. Residues 119 to 140 (CVKIATLTHPVFVWLKYRLPGW) lie on the Cytoplasmic side of the membrane. A helical transmembrane segment spans residues 141 to 161 (VPWMLLSAVGMSSLTSILCFI). Residues 162-198 (GNYMIYQNHAKSGHQPWNVTGNSLRHSLEKFYFFSIK) are Extracellular-facing. N179 is a glycosylation site (N-linked (GlcNAc...) asparagine). A helical transmembrane segment spans residues 199–219 (IIMWTIPTVVFSIFMSLLLVS). Topologically, residues 220 to 244 (LVRHMKKTFLALSELRDVWAQAHFK) are cytoplasmic. Residues 245–265 (ALLPLLSFIVLFISCFLTLVL) form a helical membrane-spanning segment. The Extracellular portion of the chain corresponds to 266 to 277 (SSASNTPYQEFR). Residues 278–298 (YWMWQVVIHLCTVIHPIVILF) traverse the membrane as a helical segment. The Cytoplasmic portion of the chain corresponds to 299–312 (SNPVLRVVIKRGCC).

This sequence belongs to the G-protein coupled receptor T2R family.

The protein resides in the membrane. Putative taste receptor which may play a role in the perception of bitterness. This Mus musculus (Mouse) protein is Taste receptor type 2 member 135 (Tas2r135).